The chain runs to 106 residues: UPF0060 membrane protein Bphy_5052 (106 aa).

The next 4 membrane-spanning stretches (helical) occupy residues 4-24, 30-50, 58-78, and 82-102; these read LLLY…PWRW, SVWL…LLTF, VYAA…WCVD, and PSAW…IIAF.

It belongs to the UPF0060 family.

Its subcellular location is the cell inner membrane. The protein is UPF0060 membrane protein Bphy_5052 of Paraburkholderia phymatum (strain DSM 17167 / CIP 108236 / LMG 21445 / STM815) (Burkholderia phymatum).